Reading from the N-terminus, the 511-residue chain is ATP synthase subunit alpha (511 aa).

An ATP-binding site is contributed by 169-176 (GDRQTGKT).

Belongs to the ATPase alpha/beta chains family. As to quaternary structure, F-type ATPases have 2 components, CF(1) - the catalytic core - and CF(0) - the membrane proton channel. CF(1) has five subunits: alpha(3), beta(3), gamma(1), delta(1), epsilon(1). CF(0) has three main subunits: a(1), b(2) and c(9-12). The alpha and beta chains form an alternating ring which encloses part of the gamma chain. CF(1) is attached to CF(0) by a central stalk formed by the gamma and epsilon chains, while a peripheral stalk is formed by the delta and b chains.

Its subcellular location is the cell inner membrane. The enzyme catalyses ATP + H2O + 4 H(+)(in) = ADP + phosphate + 5 H(+)(out). Its function is as follows. Produces ATP from ADP in the presence of a proton gradient across the membrane. The alpha chain is a regulatory subunit. This chain is ATP synthase subunit alpha, found in Bartonella quintana (strain Toulouse) (Rochalimaea quintana).